The following is a 102-amino-acid chain: Aspartyl/glutamyl-tRNA(Asn/Gln) amidotransferase subunit C (102 aa).

The protein belongs to the GatC family. Heterotrimer of A, B and C subunits.

It catalyses the reaction L-glutamyl-tRNA(Gln) + L-glutamine + ATP + H2O = L-glutaminyl-tRNA(Gln) + L-glutamate + ADP + phosphate + H(+). The catalysed reaction is L-aspartyl-tRNA(Asn) + L-glutamine + ATP + H2O = L-asparaginyl-tRNA(Asn) + L-glutamate + ADP + phosphate + 2 H(+). Its function is as follows. Allows the formation of correctly charged Asn-tRNA(Asn) or Gln-tRNA(Gln) through the transamidation of misacylated Asp-tRNA(Asn) or Glu-tRNA(Gln) in organisms which lack either or both of asparaginyl-tRNA or glutaminyl-tRNA synthetases. The reaction takes place in the presence of glutamine and ATP through an activated phospho-Asp-tRNA(Asn) or phospho-Glu-tRNA(Gln). This is Aspartyl/glutamyl-tRNA(Asn/Gln) amidotransferase subunit C from Lactobacillus acidophilus (strain ATCC 700396 / NCK56 / N2 / NCFM).